The chain runs to 267 residues: Ribonuclease HII (267 aa).

Residues 57 to 245 form the RNase H type-2 domain; the sequence is WPVAGCDEVG…VVAARERHRA (189 aa). A divalent metal cation-binding residues include D63, E64, and D154.

This sequence belongs to the RNase HII family. Mn(2+) is required as a cofactor. It depends on Mg(2+) as a cofactor.

Its subcellular location is the cytoplasm. The enzyme catalyses Endonucleolytic cleavage to 5'-phosphomonoester.. Functionally, endonuclease that specifically degrades the RNA of RNA-DNA hybrids. The sequence is that of Ribonuclease HII from Nitrobacter hamburgensis (strain DSM 10229 / NCIMB 13809 / X14).